The following is a 201-amino-acid chain: Recombination protein RecR (201 aa).

The C4-type zinc-finger motif lies at 60 to 75; that stretch reads CRSCGNVDTSDPCTIC. The 96-residue stretch at 83-178 folds into the Toprim domain; the sequence is TTLVVVEDVS…TVTRLAHGVP (96 aa).

Belongs to the RecR family.

In terms of biological role, may play a role in DNA repair. It seems to be involved in an RecBC-independent recombinational process of DNA repair. It may act with RecF and RecO. The sequence is that of Recombination protein RecR from Methylorubrum extorquens (strain CM4 / NCIMB 13688) (Methylobacterium extorquens).